The sequence spans 32 residues: Acyclotide phyb-M (32 aa).

A Pyrrolidone carboxylic acid modification is found at Q1. Intrachain disulfides connect C5-C21, C9-C23, and C14-C28.

Post-translationally, contains 3 disulfide bonds. In terms of tissue distribution, expressed in midvein, lamina and periphery of leaves (at protein level).

Functionally, probably participates in a plant defense mechanism. The polypeptide is Acyclotide phyb-M (Petunia hybrida (Petunia)).